The chain runs to 99 residues: uncharacterized protein (99 aa).

Residues 1–99 (MSDFPPSYQQ…KYHSKSDVGF (99 aa)) form a disordered region. Residues 19-29 (QESSTSNNASE) show a composition bias toward polar residues.

This is an uncharacterized protein from Schizosaccharomyces pombe (strain 972 / ATCC 24843) (Fission yeast).